A 90-amino-acid chain; its full sequence is UPF0298 protein SSU98_1559 (90 aa).

Belongs to the UPF0298 family.

Its subcellular location is the cytoplasm. In Streptococcus suis (strain 98HAH33), this protein is UPF0298 protein SSU98_1559.